Reading from the N-terminus, the 301-residue chain is Methionyl-tRNA formyltransferase (301 aa).

S109–P112 provides a ligand contact to (6S)-5,6,7,8-tetrahydrofolate.

The protein belongs to the Fmt family.

The catalysed reaction is L-methionyl-tRNA(fMet) + (6R)-10-formyltetrahydrofolate = N-formyl-L-methionyl-tRNA(fMet) + (6S)-5,6,7,8-tetrahydrofolate + H(+). Functionally, attaches a formyl group to the free amino group of methionyl-tRNA(fMet). The formyl group appears to play a dual role in the initiator identity of N-formylmethionyl-tRNA by promoting its recognition by IF2 and preventing the misappropriation of this tRNA by the elongation apparatus. The polypeptide is Methionyl-tRNA formyltransferase (Novosphingobium aromaticivorans (strain ATCC 700278 / DSM 12444 / CCUG 56034 / CIP 105152 / NBRC 16084 / F199)).